The sequence spans 348 residues: [LysW]-L-2-aminoadipate 6-phosphate reductase (348 aa).

An NADP(+)-binding site is contributed by 14–17 (SGYA). The active site involves cysteine 151. Asparagine 315 lines the NADP(+) pocket.

Belongs to the NAGSA dehydrogenase family. Type 1 subfamily. LysY sub-subfamily.

The protein resides in the cytoplasm. The enzyme catalyses [amino-group carrier protein]-C-terminal-N-(1-carboxy-5-oxopentan-1-yl)-L-glutamine + phosphate + NADP(+) = [amino-group carrier protein]-C-terminal-N-(1-carboxy-5-phosphooxy-5-oxopentan-1-yl)-L-glutamine + NADPH + H(+). It participates in amino-acid biosynthesis; L-lysine biosynthesis via AAA pathway; L-lysine from L-alpha-aminoadipate (Thermus route): step 3/5. Functionally, catalyzes the NADPH-dependent reduction of [LysW]-aminoadipate 6-phosphate to yield [LysW]-aminoadipate 6-semialdehyde. This is [LysW]-L-2-aminoadipate 6-phosphate reductase from Deinococcus radiodurans (strain ATCC 13939 / DSM 20539 / JCM 16871 / CCUG 27074 / LMG 4051 / NBRC 15346 / NCIMB 9279 / VKM B-1422 / R1).